Here is a 122-residue protein sequence, read N- to C-terminus: Structural protein p14.5 (122 aa).

Disordered regions lie at residues 1-27 and 73-122; these read MADFNSPIQYLKEDSRDRTSIGSLEYD and EDNN…HKSK. Ala-2 bears the N-acetylalanine; by host mark. A compositionally biased stretch (basic residues) spans 105–122; the sequence is KPKKKKHLFPKLSSHKSK.

The protein belongs to the asfivirus structural protein p14.5 family. Interacts with the major capsid protein. Interacts with host IRF3; this interaction interferes with the recruitment of IRF3 to TBK1. Acetylated.

It is found in the virion. Structural protein required for transport of intracellular particles from the assembly sites to the plasma membrane. Binds to both ssDNA and dsDNA. Suppressed the activation of the cGAS/STING pathway by interfering with the recruitment of IRF3 to TBK1, which in turn suppresses IRF3 phosphorylation, decreasing interferon production. This is Structural protein p14.5 from African swine fever virus (isolate Warthog/Namibia/Wart80/1980) (ASFV).